Reading from the N-terminus, the 168-residue chain is 2-C-methyl-D-erythritol 2,4-cyclodiphosphate synthase (168 aa).

Asp11 and His13 together coordinate a divalent metal cation. 4-CDP-2-C-methyl-D-erythritol 2-phosphate is bound by residues 11 to 13 (DVH) and 41 to 42 (HS). An a divalent metal cation-binding site is contributed by His49. 4-CDP-2-C-methyl-D-erythritol 2-phosphate-binding positions include 63 to 65 (DIG), 68 to 72 (FPDTD), 139 to 142 (TTTE), Phe146, and Arg149.

This sequence belongs to the IspF family. As to quaternary structure, homotrimer. The cofactor is a divalent metal cation.

It carries out the reaction 4-CDP-2-C-methyl-D-erythritol 2-phosphate = 2-C-methyl-D-erythritol 2,4-cyclic diphosphate + CMP. It functions in the pathway isoprenoid biosynthesis; isopentenyl diphosphate biosynthesis via DXP pathway; isopentenyl diphosphate from 1-deoxy-D-xylulose 5-phosphate: step 4/6. Its function is as follows. Involved in the biosynthesis of isopentenyl diphosphate (IPP) and dimethylallyl diphosphate (DMAPP), two major building blocks of isoprenoid compounds. Catalyzes the conversion of 4-diphosphocytidyl-2-C-methyl-D-erythritol 2-phosphate (CDP-ME2P) to 2-C-methyl-D-erythritol 2,4-cyclodiphosphate (ME-CPP) with a corresponding release of cytidine 5-monophosphate (CMP). This Psychrobacter cryohalolentis (strain ATCC BAA-1226 / DSM 17306 / VKM B-2378 / K5) protein is 2-C-methyl-D-erythritol 2,4-cyclodiphosphate synthase.